A 1996-amino-acid chain; its full sequence is Non-reducing polyketide synthase atnG (1996 aa).

Residues 9–245 (FLFGDQADAP…AELPAFGAVH (237 aa)) form an N-terminal acylcarrier protein transacylase (SAT) domain region. The region spanning 366–794 (SGSVAVIGMS…GGNSCFVLEE (429 aa)) is the Ketosynthase family 3 (KS3) domain. Catalysis depends on for beta-ketoacyl synthase activity residues cysteine 538, histidine 673, and histidine 713. A malonyl-CoA:ACP transacylase (MAT) domain region spans residues 891–1150 (AFAFTGQGAH…VKYTQAISHC (260 aa)). Serine 982 acts as the For acyl/malonyl transferase activity in catalysis. The interval 1263–1392 (HHLVSQDDNG…CCIRQTDEQD (130 aa)) is N-terminal hotdog fold. The PKS/mFAS DH domain maps to 1263–1569 (HHLVSQDDNG…FRKMPRTTLH (307 aa)). Residues 1267-1568 (SQDDNGKEQS…RFRKMPRTTL (302 aa)) form a product template (PT) domain region. Histidine 1295 functions as the Proton acceptor; for dehydratase activity in the catalytic mechanism. The interval 1416–1569 (ASGIANRFQG…FRKMPRTTLH (154 aa)) is C-terminal hotdog fold. Aspartate 1481 serves as the catalytic Proton donor; for dehydratase activity. Residues 1573–1621 (GKAVPPKPAKETSHPSVEATAPATTNGRSSATNAQAEAPAPPVNGSNGH) are disordered. Residues 1594–1607 (PATTNGRSSATNAQ) show a composition bias toward polar residues. Residues 1620–1697 (GHRKTVESVL…DAQRQLRTLE (78 aa)) enclose the Carrier domain. At serine 1657 the chain carries O-(pantetheine 4'-phosphoryl)serine. A thioesterase (TE) domain region spans residues 1725-1923 (KRECNVVLMQ…ERTFVVWAKK (199 aa)).

It functions in the pathway secondary metabolite biosynthesis; terpenoid biosynthesis. Functionally, non-reducing polyketide synthase; part of the gene cluster that mediates the biosynthesis of the meroterpenoids arthripenoids. The pathway begins with the HR-PKS atnH that catalyzes two chain-extension steps to form a reduced triketide, which then primes the SAT domain in the NR-PKS atnG to initiate three more cycles of extension to give a linear hexaketide corresponding to the polyketide part of arthripenoids. The FAD-dependent monooxygenase atnJ then performs an oxidative decarboxylation at C11 of the atnH/atnG product, via an electrophilic aromatic hydroxylation with concomitant ipso-decarboxylation. The membrane-bound polyprenyl transferase atnF then introduces a farnesyl group before the FAD-dependent monooxygenase atnK functions as the first epoxidase on terminal C12'-C13' olefin, followed by a second epoxidation on C7'-C8' catalyzed by atnA. The terpene cyclase/mutase atnI then initiates the sequential tricyclic ring formation through protonation of the terminal epoxide and catalyzes the regioselective and stereoselective 6/6/6-tricyclic ring formation. The cytochrome P450 monooxygenase atnM is responsible for hydroxylating both C1' and C10'. The next steps may involve ketoreduction and acetyl transfer by the ketoreductase atnB and the acetyltransferase atnC, and lead to the production of arthripenoid B, the final biosynthetic product of the atn cluster. The hydroquinone moiety in arthripenoid B is prone to undergo spontaneous oxidation to afford a benzoquinone compound, a key intermediate for generating structure diversity. For instance, addition of a cysteine followed by ring contraction gives arthripenoid A, tautomerization gives the main product arthripenoid C, addition of a molecular of water or amine affords arthripenoid D or E, respectively, and loss of one water forms arthripenoid F. The protein is Non-reducing polyketide synthase atnG of Arthrinium sp.